A 419-amino-acid polypeptide reads, in one-letter code: MAKEGVEKAEETEQMIEKEAGKEPAEGGGGDGSHRLGDAQEMRAVVLAGFGGLNKLRLFRKAMPEPQDGELKIRVKACGLNFIDLMVRQGNIDNPPKTPLVPGFECSGIVEALGDSVKGYEIGDRVMAFVNYNAWAEVVCTPVEFVYKIPDDMSFSEAAAFPMNFVTAYVMLFEVANLREGMSVLVHSAGGGVGQAVAQLCSTVPNVTVFGTASTFKHEAIKDSVTHLFDRNADYVQEVKRISAEGVDIVLDCLCGDNTGKGLSLLKPLGTYILYGSSNMVTGETKSFFSFAKSWWQVEKVNPIKLYEENKVIAGFSLLNLLFKQGRAGLIRGVVEKLIGLYNQKKIKPVVDSLWALEEVKEAMQRIHDRGNIGKLILDVEKTPTPLMANDSTETSEAGEEEEDHEGDSENKERMPFIQ.

Residues 1-25 (MAKEGVEKAEETEQMIEKEAGKEPA) show a composition bias toward basic and acidic residues. Disordered regions lie at residues 1-36 (MAKE…SHRL) and 384-419 (PTPL…PFIQ). Position 392 is a phosphoserine (Ser-392). Phosphothreonine is present on residues Thr-393 and Thr-395. Residue Ser-396 is modified to Phosphoserine. The segment covering 397–407 (EAGEEEEDHEG) has biased composition (acidic residues). A compositionally biased stretch (basic and acidic residues) spans 408 to 419 (DSENKERMPFIQ).

Belongs to the zinc-containing alcohol dehydrogenase family. Quinone oxidoreductase subfamily. As to expression, detected in skin fibroblasts.

The chain is Synaptic vesicle membrane protein VAT-1 homolog-like (VAT1L) from Homo sapiens (Human).